Reading from the N-terminus, the 312-residue chain is Olfactory receptor 6X1 (312 aa).

Topologically, residues 1-23 (MRNGTVITEFILLGFPVIQGLQT) are extracellular. The N-linked (GlcNAc...) asparagine glycan is linked to N3. Residues 24-44 (PLFIAIFLTYILTLAGNGLII) traverse the membrane as a helical segment. Residues 45–52 (ATVWAEPR) are Cytoplasmic-facing. The helical transmembrane segment at 53–73 (LQIPMYFFLCNLSFLEIWYTT) threads the bilayer. At 74–97 (TVIPKLLGTFVVARTVICMSCCLL) the chain is on the extracellular side. Cysteines 95 and 187 form a disulfide. Residues 98-118 (QAFFHFFVGTTEFLILTIMSF) traverse the membrane as a helical segment. Topologically, residues 119–137 (DRYLTICNPLHHPTIMTSK) are cytoplasmic. The helical transmembrane segment at 138 to 158 (LCLQLALSSWVVGFTIVFCQT) threads the bilayer. Topologically, residues 159 to 195 (MLLIQLPFCGNNVISHFYCDVGPSLKAACIDTSILEL) are extracellular. A helical transmembrane segment spans residues 196–215 (LGVIATILVIPGSLLFNMIS). The Cytoplasmic segment spans residues 216-235 (YIYILSAILRIPSATGHQKT). Residues 236 to 256 (FSTCASHLTVVSLLYGAVLFM) traverse the membrane as a helical segment. At 257-269 (YLRPTAHSSFKIN) the chain is on the extracellular side. A helical membrane pass occupies residues 270-290 (KVVSVLNTILTPLLNPFIYTI). The Cytoplasmic portion of the chain corresponds to 291-312 (RNKEVKGALRKAMTCPKTGHAK).

Belongs to the G-protein coupled receptor 1 family.

It localises to the cell membrane. Odorant receptor. In Homo sapiens (Human), this protein is Olfactory receptor 6X1 (OR6X1).